The sequence spans 410 residues: Multifunctional CCA protein (410 aa).

2 residues coordinate ATP: glycine 8 and arginine 11. Glycine 8 and arginine 11 together coordinate CTP. Residues aspartate 21 and aspartate 23 each contribute to the Mg(2+) site. 3 residues coordinate ATP: arginine 91, arginine 138, and arginine 141. CTP-binding residues include arginine 91, arginine 138, and arginine 141. The HD domain maps to 229–347; it reads TGIHQEMVSD…AQLALVCEAD (119 aa).

The protein belongs to the tRNA nucleotidyltransferase/poly(A) polymerase family. Bacterial CCA-adding enzyme type 1 subfamily. In terms of assembly, monomer. Can also form homodimers and oligomers. Mg(2+) serves as cofactor. It depends on Ni(2+) as a cofactor.

The catalysed reaction is a tRNA precursor + 2 CTP + ATP = a tRNA with a 3' CCA end + 3 diphosphate. It catalyses the reaction a tRNA with a 3' CCA end + 2 CTP + ATP = a tRNA with a 3' CCACCA end + 3 diphosphate. Its function is as follows. Catalyzes the addition and repair of the essential 3'-terminal CCA sequence in tRNAs without using a nucleic acid template. Adds these three nucleotides in the order of C, C, and A to the tRNA nucleotide-73, using CTP and ATP as substrates and producing inorganic pyrophosphate. tRNA 3'-terminal CCA addition is required both for tRNA processing and repair. Also involved in tRNA surveillance by mediating tandem CCA addition to generate a CCACCA at the 3' terminus of unstable tRNAs. While stable tRNAs receive only 3'-terminal CCA, unstable tRNAs are marked with CCACCA and rapidly degraded. The polypeptide is Multifunctional CCA protein (Xanthomonas oryzae pv. oryzae (strain MAFF 311018)).